A 1020-amino-acid chain; its full sequence is MPRNVYGMNQSEVYRNVDREDPKAILNGVAVTGLVGVLRQLGDLAEFAAEIFHGIQEEVMATASRSNQLKIRLQHIEATVPPLEKAMLAQTTHIHFAYTGGLEWHPRIPITQNHLIYDDLPHIIMDPYEECRGPPRLHLLDKFDINGPGSCLKRYSDPTYFRRASSNLSQGNKKFQKDKKHCKMKKKKTSSRSRDMSRLASLANQNARKTFASFSFSGQTSSTKTTSTSDMEKRYDFQDHHSRSFESRSGSGYNECLSTATSSLKTGERPKGVFVSSSLTPGSCTIASVLSECETEDAHDNFQFSPSQGQAARGSSCVSWDEKAEIVESLGLQTDEASEMVEANSVVDTLDEKPSYGEGIGGVDFHSKDNENDKSESGLRKRAGIDEVREIKNGREIVGEPRDSEQETESEGECFVDALNTIESESENNQGLQTSQVSSSCGVADERLEKSVCEQETEQNSYSVEDSCRSMDGLMANSFKNEENASSENVSVEMHQQNLQAGSDINRLQKNDLCANKDMRNDSGGKDTITFTFVPGLENSLVDSSNPLIHHGLQENQETEAESSGDLEAFKIWTNGGLLGLKPSKPPVLAMPSSLSPDCKTEERTVGFAEAEKDKADDLVENASHRHVLNNSSLATPGTQNPGSSNGIVMGIVDQRESHETSSGVFGLSHKFLTSGFRRKDSFAHDRKTVPATIPENDEVTTERRRFCDQDINEKTFMDPFRDEAPIDWITSSPPLQHMKISLNPADTLQASRLKLKFSDGDNTYNTFSSFQLLPETGTSLPDSYSDDDTFCRSSPYMSDTDYLSDNHSLSNSEPWEESSDSHGRKEQELYDSFHESRHVDNNAEASPLGIKSESSCVAVNLSYLQNPAEPLPPPFPPMQWMVSKTPSEKMEDKTQSLQLQEALRFAFEKHISLPTAKNELPSMVTSAPKPEIKAHLKNNVREEKQSANAKETETGDFLQQIRTQQFNLRPVVMTTTSSATATTDPIINTKISAILEKANSIRQAVASKDGDESDTWSDT.

3 disordered regions span residues 167 to 198 (NLSQ…DMSR), 351 to 382 (DEKP…LRKR), and 802 to 827 (DYLS…GRKE). Basic residues predominate over residues 174 to 191 (KFQKDKKHCKMKKKKTSS). The span at 365-382 (FHSKDNENDKSESGLRKR) shows a compositional bias: basic and acidic residues. Residues 802-814 (DYLSDNHSLSNSE) are compositionally biased toward polar residues. Residues 954 to 972 (ETGDFLQQIRTQQFNLRPV) enclose the WH2 domain.

It belongs to the SCAR/WAVE family. In terms of assembly, binds BRK1. Interacts with SPK1, ABI1, ABI2, ABI3 and ABI4. Expressed in expanding cotyledons, expanding leaves and expanding siliques containing developing embryos. Detected in unopened flower buds. Reduced expression in mature leaves and mature cotyledons.

It localises to the cytoplasm. Its subcellular location is the cytoskeleton. Its function is as follows. Involved in regulation of actin and microtubule organization. Part of a WAVE complex that activates the Arp2/3 complex. Regulates trichome branch positioning and expansion. In Arabidopsis thaliana (Mouse-ear cress), this protein is Protein SCAR3 (SCAR3).